Reading from the N-terminus, the 300-residue chain is Porphobilinogen deaminase (300 aa).

Cys-239 carries the post-translational modification S-(dipyrrolylmethanemethyl)cysteine.

It belongs to the HMBS family. Monomer. It depends on dipyrromethane as a cofactor.

The enzyme catalyses 4 porphobilinogen + H2O = hydroxymethylbilane + 4 NH4(+). It functions in the pathway porphyrin-containing compound metabolism; protoporphyrin-IX biosynthesis; coproporphyrinogen-III from 5-aminolevulinate: step 2/4. Its function is as follows. Tetrapolymerization of the monopyrrole PBG into the hydroxymethylbilane pre-uroporphyrinogen in several discrete steps. This Francisella philomiragia subsp. philomiragia (strain ATCC 25017 / CCUG 19701 / FSC 153 / O#319-036) protein is Porphobilinogen deaminase.